Reading from the N-terminus, the 149-residue chain is 3-dehydroquinate dehydratase (149 aa).

The active-site Proton acceptor is the Tyr26. Substrate contacts are provided by Asn77, His83, and Asp90. His103 (proton donor) is an active-site residue. Substrate-binding positions include 104–105 (LS) and Arg114.

This sequence belongs to the type-II 3-dehydroquinase family. In terms of assembly, homododecamer.

The catalysed reaction is 3-dehydroquinate = 3-dehydroshikimate + H2O. It participates in metabolic intermediate biosynthesis; chorismate biosynthesis; chorismate from D-erythrose 4-phosphate and phosphoenolpyruvate: step 3/7. Catalyzes a trans-dehydration via an enolate intermediate. In Aeromonas salmonicida (strain A449), this protein is 3-dehydroquinate dehydratase.